The sequence spans 473 residues: Photosystem II CP43 reaction center protein (473 aa).

Residues 1-14 (MKTLYSLRRFYPVE) constitute a propeptide that is removed on maturation. T15 bears the N-acetylthreonine mark. T15 is subject to Phosphothreonine. 5 helical membrane passes run 69–93 (LFEVAHFVPEKPMYEQGLILLPHLA), 134–155 (LLGPETLEESFPFFGYVWKDRN), 178–200 (KALYFGGVYDTWAPGGGDVRKIT), 255–275 (KPFAWARRALVWSGEAYLSYS), and 291–312 (WFNNTAYPSEFYGPTGPEASQA). Residue E367 coordinates [CaMn4O5] cluster. Positions 426 to 473 (LSTSHFVLGFFLFVGHLWHAGRARAAAAGFEKGIDRDFEPVLSMTPLN) are excised as a propeptide. A helical membrane pass occupies residues 447–471 (RARAAAAGFEKGIDRDFEPVLSMTP).

Belongs to the PsbB/PsbC family. PsbC subfamily. As to quaternary structure, PSII is composed of 1 copy each of membrane proteins PsbA, PsbB, PsbC, PsbD, PsbE, PsbF, PsbH, PsbI, PsbJ, PsbK, PsbL, PsbM, PsbT, PsbX, PsbY, PsbZ, Psb30/Ycf12, at least 3 peripheral proteins of the oxygen-evolving complex and a large number of cofactors. It forms dimeric complexes. The cofactor is Binds multiple chlorophylls and provides some of the ligands for the Ca-4Mn-5O cluster of the oxygen-evolving complex. It may also provide a ligand for a Cl- that is required for oxygen evolution. PSII binds additional chlorophylls, carotenoids and specific lipids.. In terms of processing, over time a tryptophan in the fifth lumenal loop is converted to 2-hydroxy-2,3-dihydrotryptophan, 2-oxo-2,3-dihydrotryptophan, and kynurenine by oxidizing species from the active site. This oxidation targets the protein for turnover.

The protein localises to the plastid. It localises to the chloroplast thylakoid membrane. Its function is as follows. One of the components of the core complex of photosystem II (PSII). It binds chlorophyll and helps catalyze the primary light-induced photochemical processes of PSII. PSII is a light-driven water:plastoquinone oxidoreductase, using light energy to abstract electrons from H(2)O, generating O(2) and a proton gradient subsequently used for ATP formation. The sequence is that of Photosystem II CP43 reaction center protein from Spinacia oleracea (Spinach).